The following is a 266-amino-acid chain: Large ribosomal subunit protein uL2c (266 aa).

The tract at residues 1–24 is disordered; it reads MAIHLYKTSTPSTRNGTVDSQVKS. The segment covering 7 to 24 has biased composition (polar residues); sequence KTSTPSTRNGTVDSQVKS.

Belongs to the universal ribosomal protein uL2 family. Part of the 50S ribosomal subunit.

Its subcellular location is the plastid. It localises to the chloroplast. The sequence is that of Large ribosomal subunit protein uL2c (rpl2) from Nicotiana debneyi (Debney's tobacco).